The chain runs to 97 residues: Putative membrane protein insertion efficiency factor (97 aa).

It belongs to the UPF0161 family.

It is found in the cell membrane. Could be involved in insertion of integral membrane proteins into the membrane. The protein is Putative membrane protein insertion efficiency factor of Lactobacillus gasseri (strain ATCC 33323 / DSM 20243 / BCRC 14619 / CIP 102991 / JCM 1131 / KCTC 3163 / NCIMB 11718 / NCTC 13722 / AM63).